Here is a 340-residue protein sequence, read N- to C-terminus: Glycerol-3-phosphate dehydrogenase [NAD(P)+] (340 aa).

Positions 13, 14, and 108 each coordinate NADPH. The sn-glycerol 3-phosphate site is built by K108, G139, and S141. Residue A143 participates in NADPH binding. Sn-glycerol 3-phosphate-binding residues include K194, D247, S257, R258, and N259. K194 acts as the Proton acceptor in catalysis. An NADPH-binding site is contributed by R258. Residues V282 and E284 each contribute to the NADPH site.

The protein belongs to the NAD-dependent glycerol-3-phosphate dehydrogenase family.

The protein resides in the cytoplasm. The catalysed reaction is sn-glycerol 3-phosphate + NAD(+) = dihydroxyacetone phosphate + NADH + H(+). The enzyme catalyses sn-glycerol 3-phosphate + NADP(+) = dihydroxyacetone phosphate + NADPH + H(+). It functions in the pathway membrane lipid metabolism; glycerophospholipid metabolism. Its function is as follows. Catalyzes the reduction of the glycolytic intermediate dihydroxyacetone phosphate (DHAP) to sn-glycerol 3-phosphate (G3P), the key precursor for phospholipid synthesis. The chain is Glycerol-3-phosphate dehydrogenase [NAD(P)+] from Streptococcus sanguinis (strain SK36).